A 390-amino-acid polypeptide reads, in one-letter code: Succinyl-diaminopimelate desuccinylase (390 aa).

His-75 is a binding site for Zn(2+). The active site involves Asp-77. Residue Asp-108 participates in Zn(2+) binding. Glu-141 serves as the catalytic Proton acceptor. Zn(2+) contacts are provided by Glu-142, Glu-170, and His-359.

This sequence belongs to the peptidase M20A family. DapE subfamily. As to quaternary structure, homodimer. Requires Zn(2+) as cofactor. Co(2+) is required as a cofactor.

The enzyme catalyses N-succinyl-(2S,6S)-2,6-diaminopimelate + H2O = (2S,6S)-2,6-diaminopimelate + succinate. It participates in amino-acid biosynthesis; L-lysine biosynthesis via DAP pathway; LL-2,6-diaminopimelate from (S)-tetrahydrodipicolinate (succinylase route): step 3/3. Its function is as follows. Catalyzes the hydrolysis of N-succinyl-L,L-diaminopimelic acid (SDAP), forming succinate and LL-2,6-diaminopimelate (DAP), an intermediate involved in the bacterial biosynthesis of lysine and meso-diaminopimelic acid, an essential component of bacterial cell walls. The chain is Succinyl-diaminopimelate desuccinylase from Maricaulis maris (strain MCS10) (Caulobacter maris).